A 228-amino-acid polypeptide reads, in one-letter code: tRNA (guanine-N(1)-)-methyltransferase (228 aa).

S-adenosyl-L-methionine contacts are provided by residues Gly-108 and 127–132; that span reads VGDFIL.

It belongs to the RNA methyltransferase TrmD family. Homodimer.

The protein localises to the cytoplasm. It carries out the reaction guanosine(37) in tRNA + S-adenosyl-L-methionine = N(1)-methylguanosine(37) in tRNA + S-adenosyl-L-homocysteine + H(+). In terms of biological role, specifically methylates guanosine-37 in various tRNAs. The polypeptide is tRNA (guanine-N(1)-)-methyltransferase (Metamycoplasma arthritidis (strain 158L3-1) (Mycoplasma arthritidis)).